Here is a 306-residue protein sequence, read N- to C-terminus: Ornithine carbamoyltransferase (306 aa).

Residues 53–56, glutamine 80, arginine 104, and 131–134 each bind carbamoyl phosphate; these read STRT and HPCQ. Residues asparagine 162, aspartate 219, and 223–224 contribute to the L-ornithine site; that span reads SM. Residues 259–260 and arginine 287 contribute to the carbamoyl phosphate site; that span reads CL.

It belongs to the aspartate/ornithine carbamoyltransferase superfamily. OTCase family.

It is found in the cytoplasm. It carries out the reaction carbamoyl phosphate + L-ornithine = L-citrulline + phosphate + H(+). It functions in the pathway amino-acid biosynthesis; L-arginine biosynthesis; L-arginine from L-ornithine and carbamoyl phosphate: step 1/3. Its function is as follows. Reversibly catalyzes the transfer of the carbamoyl group from carbamoyl phosphate (CP) to the N(epsilon) atom of ornithine (ORN) to produce L-citrulline. The sequence is that of Ornithine carbamoyltransferase from Acinetobacter baumannii (strain ATCC 17978 / DSM 105126 / CIP 53.77 / LMG 1025 / NCDC KC755 / 5377).